The primary structure comprises 463 residues: Argininosuccinate lyase (463 aa).

It belongs to the lyase 1 family. Argininosuccinate lyase subfamily.

It is found in the cytoplasm. It carries out the reaction 2-(N(omega)-L-arginino)succinate = fumarate + L-arginine. The protein operates within amino-acid biosynthesis; L-arginine biosynthesis; L-arginine from L-ornithine and carbamoyl phosphate: step 3/3. The chain is Argininosuccinate lyase from Methylorubrum extorquens (strain CM4 / NCIMB 13688) (Methylobacterium extorquens).